A 286-amino-acid chain; its full sequence is Thymidylate synthase (286 aa).

140 to 141 contacts dUMP; sequence RR. Residue cysteine 161 is the Nucleophile of the active site. Residues 185–188, asparagine 196, and 226–228 each bind dUMP; these read RSND and HIY. Aspartate 188 contributes to the (6R)-5,10-methylene-5,6,7,8-tetrahydrofolate binding site. Alanine 285 contacts (6R)-5,10-methylene-5,6,7,8-tetrahydrofolate.

Belongs to the thymidylate synthase family. Bacterial-type ThyA subfamily. As to quaternary structure, homodimer.

It localises to the cytoplasm. The enzyme catalyses dUMP + (6R)-5,10-methylene-5,6,7,8-tetrahydrofolate = 7,8-dihydrofolate + dTMP. It functions in the pathway pyrimidine metabolism; dTTP biosynthesis. Its function is as follows. Catalyzes the reductive methylation of 2'-deoxyuridine-5'-monophosphate (dUMP) to 2'-deoxythymidine-5'-monophosphate (dTMP) while utilizing 5,10-methylenetetrahydrofolate (mTHF) as the methyl donor and reductant in the reaction, yielding dihydrofolate (DHF) as a by-product. This enzymatic reaction provides an intracellular de novo source of dTMP, an essential precursor for DNA biosynthesis. The sequence is that of Thymidylate synthase from Streptococcus thermophilus (strain ATCC BAA-491 / LMD-9).